The primary structure comprises 43 residues: Snake venom metalloproteinase crotalin (43 aa).

Residues 1–43 (LLRRKSHDHAQNHDGDKCLRGASLGYYQSFLNQYKPQCILNKP) enclose the Peptidase M12B domain. A Zn(2+)-binding site is contributed by histidine 13.

This sequence belongs to the venom metalloproteinase (M12B) family. P-I subfamily. In terms of assembly, monomer. Zn(2+) is required as a cofactor. This protein autoproteolytically degrades to 10 kDa and 14 kDa fragments in the presence of SDS. Interestingly, the two fragments, as well as reduced crotalin are able to bind vWF, indicating that the binding activity does not require a specific protein conformation. As to expression, expressed by the venom gland.

It is found in the secreted. Functionally, snake venom zinc metalloproteinase that inhibits ristocin-induced platelet aggregation by abolishing the binding of von Willebrand factor (vWF) to platelet glycoprotein Ib alpha (GPIBA) through the cleavage of both GP1BA and vWF. Also has fibrinogenolytic activities by degrading the alpha- (FGA) and beta-chain (FGB) of fibrinogen. In vivo, induces a slight hemorrhage when applied to chick chorioallantoic membrane and has potent antithrombic effect. This chain is Snake venom metalloproteinase crotalin, found in Crotalus atrox (Western diamondback rattlesnake).